The chain runs to 339 residues: Putative zinc metalloprotease FN1322 (339 aa).

Zn(2+) is bound at residue His-17. Glu-18 is an active-site residue. Zn(2+) is bound at residue His-21. Transmembrane regions (helical) follow at residues 88-110 (FIVLFAGVFMNFLMAFILLFVTA), 262-284 (FGWISIASLCVVLSINIGVLNLL), and 318-335 (GMILLLFFILMISVNDVW). The PDZ domain maps to 96 to 179 (FMNFLMAFIL…ITALVERNGK (84 aa)).

This sequence belongs to the peptidase M50B family. Requires Zn(2+) as cofactor.

The protein resides in the cell membrane. This is Putative zinc metalloprotease FN1322 from Fusobacterium nucleatum subsp. nucleatum (strain ATCC 25586 / DSM 15643 / BCRC 10681 / CIP 101130 / JCM 8532 / KCTC 2640 / LMG 13131 / VPI 4355).